A 286-amino-acid chain; its full sequence is Bifunctional protein FolD (286 aa).

NADP(+) is bound by residues 166–168 (GAS) and Ile-232.

This sequence belongs to the tetrahydrofolate dehydrogenase/cyclohydrolase family. In terms of assembly, homodimer.

It catalyses the reaction (6R)-5,10-methylene-5,6,7,8-tetrahydrofolate + NADP(+) = (6R)-5,10-methenyltetrahydrofolate + NADPH. It carries out the reaction (6R)-5,10-methenyltetrahydrofolate + H2O = (6R)-10-formyltetrahydrofolate + H(+). It functions in the pathway one-carbon metabolism; tetrahydrofolate interconversion. Its function is as follows. Catalyzes the oxidation of 5,10-methylenetetrahydrofolate to 5,10-methenyltetrahydrofolate and then the hydrolysis of 5,10-methenyltetrahydrofolate to 10-formyltetrahydrofolate. The sequence is that of Bifunctional protein FolD from Shewanella piezotolerans (strain WP3 / JCM 13877).